Here is a 340-residue protein sequence, read N- to C-terminus: Serine/threonine-protein kinase PDIK1L (340 aa).

The region spanning tyrosine 8 to phenylalanine 333 is the Protein kinase domain. Residues valine 14–valine 22 and lysine 37 each bind ATP. Aspartate 164 functions as the Proton acceptor in the catalytic mechanism.

It belongs to the protein kinase superfamily. Ser/Thr protein kinase family.

The protein resides in the nucleus. It carries out the reaction L-seryl-[protein] + ATP = O-phospho-L-seryl-[protein] + ADP + H(+). It catalyses the reaction L-threonyl-[protein] + ATP = O-phospho-L-threonyl-[protein] + ADP + H(+). The chain is Serine/threonine-protein kinase PDIK1L (PDIK1L) from Pongo abelii (Sumatran orangutan).